Reading from the N-terminus, the 440-residue chain is Xaa-Pro dipeptidase (440 aa).

Residues aspartate 246, aspartate 257, histidine 337, glutamate 382, and glutamate 421 each contribute to the Mn(2+) site.

It belongs to the peptidase M24B family. Bacterial-type prolidase subfamily. Mn(2+) is required as a cofactor.

The enzyme catalyses Xaa-L-Pro dipeptide + H2O = an L-alpha-amino acid + L-proline. Functionally, splits dipeptides with a prolyl residue in the C-terminal position. This is Xaa-Pro dipeptidase from Aeromonas hydrophila subsp. hydrophila (strain ATCC 7966 / DSM 30187 / BCRC 13018 / CCUG 14551 / JCM 1027 / KCTC 2358 / NCIMB 9240 / NCTC 8049).